A 379-amino-acid chain; its full sequence is cAMP-dependent protein kinase type I-alpha regulatory subunit (379 aa).

Methionine 1 is modified (N-acetylmethionine). The segment at 1-134 is dimerization and phosphorylation; that stretch reads MASSSTSSEE…ALAKAIEKNV (134 aa). A disordered region spans residues 63–93; that stretch reads QMVSQQKSSSRSDSREDEVSPPMNPVVKGRR. Residues 94–98 carry the Pseudophosphorylation motif motif; the sequence is RRGAI. 3',5'-cyclic AMP is bound by residues 135–252, glutamate 200, arginine 209, 253–379, glutamate 324, and arginine 333; these read LFAH…SKVS and ILES…SLSV.

The protein belongs to the cAMP-dependent kinase regulatory chain family. As to quaternary structure, the inactive holoenzyme is composed of two regulatory chains and two catalytic chains. Activation by cAMP releases the two active catalytic monomers and the regulatory dimer. Interacts with PRKACA and PRKACB. Interacts with PRRC1; resulting in PKA activation. The pseudophosphorylation site binds to the substrate-binding region of the catalytic chain, resulting in the inhibition of its activity.

Its subcellular location is the cell membrane. Functionally, regulatory subunit of the cAMP-dependent protein kinases involved in cAMP signaling in cells. The polypeptide is cAMP-dependent protein kinase type I-alpha regulatory subunit (prkar1aa) (Danio rerio (Zebrafish)).